The sequence spans 215 residues: 7-methyl-GTP pyrophosphatase (215 aa).

Aspartate 79 acts as the Proton acceptor in catalysis.

This sequence belongs to the Maf family. YceF subfamily. It depends on a divalent metal cation as a cofactor.

Its subcellular location is the cytoplasm. It catalyses the reaction N(7)-methyl-GTP + H2O = N(7)-methyl-GMP + diphosphate + H(+). Functionally, nucleoside triphosphate pyrophosphatase that hydrolyzes 7-methyl-GTP (m(7)GTP). May have a dual role in cell division arrest and in preventing the incorporation of modified nucleotides into cellular nucleic acids. This is 7-methyl-GTP pyrophosphatase from Burkholderia mallei (strain ATCC 23344).